Reading from the N-terminus, the 260-residue chain is Small ribosomal subunit protein uS2 (260 aa).

The protein belongs to the universal ribosomal protein uS2 family.

The chain is Small ribosomal subunit protein uS2 from Gluconacetobacter diazotrophicus (strain ATCC 49037 / DSM 5601 / CCUG 37298 / CIP 103539 / LMG 7603 / PAl5).